The chain runs to 285 residues: Pantothenate synthetase (285 aa).

30 to 37 (MGYLHEGH) serves as a coordination point for ATP. Catalysis depends on H37, which acts as the Proton donor. Residue Q61 participates in (R)-pantoate binding. Residue Q61 coordinates beta-alanine. 148-151 (GKKD) contributes to the ATP binding site. Q154 provides a ligand contact to (R)-pantoate. ATP contacts are provided by residues I177 and 185–188 (LSSR).

It belongs to the pantothenate synthetase family. In terms of assembly, homodimer.

Its subcellular location is the cytoplasm. It catalyses the reaction (R)-pantoate + beta-alanine + ATP = (R)-pantothenate + AMP + diphosphate + H(+). Its pathway is cofactor biosynthesis; (R)-pantothenate biosynthesis; (R)-pantothenate from (R)-pantoate and beta-alanine: step 1/1. Catalyzes the condensation of pantoate with beta-alanine in an ATP-dependent reaction via a pantoyl-adenylate intermediate. In Leptospira borgpetersenii serovar Hardjo-bovis (strain JB197), this protein is Pantothenate synthetase.